The chain runs to 312 residues: Zinc finger protein-like 1 (312 aa).

The segment at 1 to 43 adopts a B box-type; degenerate zinc-finger fold; it reads MGLCKCPKRKVTNLFCFEHRVNVCEHCLVANHAKCIVQSYLQW. Topologically, residues 1–268 are cytoplasmic; the sequence is MGLCKCPKRK…RPLTLLQRAG (268 aa). Residues 53–101 form an RING-type; degenerate zinc finger; it reads CRLCNIPLAARETTRLICYDLFHWACLNERAAQLPRNTAPAGYQCPSCS. The interval 144 to 233 is disordered; sequence EPEPLNTSEF…RAPGLHRDCD (90 aa). Residues 148 to 173 are compositionally biased toward polar residues; that stretch reads LNTSEFSDWSSFNASGSPEQEETASA. Basic and acidic residues predominate over residues 215-233; sequence KVYDTRDDERAPGLHRDCD. The helical transmembrane segment at 269 to 289 threads the bilayer; that stretch reads LLLLLGLLGFLALLALMSRLG. The Lumenal portion of the chain corresponds to 290 to 312; that stretch reads RAAADSDPNLDPLMNPHIRVGPS.

It belongs to the ZFPL1 family. Interacts with GOLGA2/GM130. Phosphorylated.

It is found in the golgi apparatus. The protein resides in the cis-Golgi network membrane. Functionally, required for cis-Golgi integrity and efficient ER to Golgi transport. Involved in the maintenance of the integrity of the cis-Golgi, possibly via its interaction with GOLGA2/GM130. The protein is Zinc finger protein-like 1 (ZFPL1) of Bos taurus (Bovine).